The following is a 468-amino-acid chain: Protein ABHD15 (468 aa).

The N-terminal stretch at 1–23 (MPPWGAALALILAVLALLGLLGP) is a signal peptide. A disordered region spans residues 33 to 61 (VGERTLPGAQDRDDGEEADGGGPADQFSD). Active-site charge relay system residues include Asp-360 and His-391. The residue at position 434 (Ser-434) is a Phosphoserine.

The protein belongs to the AB hydrolase superfamily. AB hydrolase 4 family. Interacts with PDE3B; this interaction regulates PDE3B's stability and expression and, thereby, impacts the antilipolytic action of insulin.

The protein localises to the secreted. May regulate adipocyte lipolysis and liver lipid accumulation. This chain is Protein ABHD15, found in Homo sapiens (Human).